The primary structure comprises 180 residues: Large ribosomal subunit protein uL6 (180 aa).

It belongs to the universal ribosomal protein uL6 family. Part of the 50S ribosomal subunit.

Functionally, this protein binds to the 23S rRNA, and is important in its secondary structure. It is located near the subunit interface in the base of the L7/L12 stalk, and near the tRNA binding site of the peptidyltransferase center. The sequence is that of Large ribosomal subunit protein uL6 from Thermoanaerobacter sp. (strain X514).